Reading from the N-terminus, the 465-residue chain is Hexokinase-4 (465 aa).

The 445-residue stretch at 10 to 454 folds into the Hexokinase domain; the sequence is AAKKEKVEQI…SGRGAALVSA (445 aa). Positions 67–203 are hexokinase small subdomain; that stretch reads EGSEVGDFLS…DFEMDVVAMV (137 aa). An ATP-binding site is contributed by 78 to 83; it reads DLGGTN. Substrate-binding positions include 151 to 152, 168 to 169, and 204 to 205; these read SF, TK, and ND. Positions 204–443 are hexokinase large subdomain; that stretch reads NDTVATMISC…CEITFIESEE (240 aa). Thr228 provides a ligand contact to ATP. Asn231, Glu256, and Glu290 together coordinate substrate. ATP contacts are provided by residues 295 to 296, 332 to 336, and 411 to 415; these read GK, TRFVS, and SVYKL.

Belongs to the hexokinase family. In terms of assembly, monomer. Interacts with MIDN; the interaction occurs preferentially at low glucose levels and results in inhibition of hexokinase activity. Interacts with GCKR; leading to sequestration in the nucleus.

The protein resides in the cytoplasm. The protein localises to the nucleus. It is found in the mitochondrion. The catalysed reaction is a D-hexose + ATP = a D-hexose 6-phosphate + ADP + H(+). It carries out the reaction D-fructose + ATP = D-fructose 6-phosphate + ADP + H(+). The enzyme catalyses D-glucose + ATP = D-glucose 6-phosphate + ADP + H(+). It catalyses the reaction D-mannose + ATP = D-mannose 6-phosphate + ADP + H(+). The protein operates within carbohydrate metabolism; hexose metabolism. Its pathway is carbohydrate degradation; glycolysis; D-glyceraldehyde 3-phosphate and glycerone phosphate from D-glucose: step 1/4. With respect to regulation, subject to allosteric regulation. Low glucose and high fructose-6-phosphate triggers association with the inhibitor GCKR followed by sequestration in the nucleus. In terms of biological role, catalyzes the phosphorylation of hexose, such as D-glucose, D-fructose and D-mannose, to hexose 6-phosphate (D-glucose 6-phosphate, D-fructose 6-phosphate and D-mannose 6-phosphate, respectively). Compared to other hexokinases, has a weak affinity for D-glucose, and is effective only when glucose is abundant. Mainly expressed in pancreatic beta cells and the liver and constitutes a rate-limiting step in glucose metabolism in these tissues. Since insulin secretion parallels glucose metabolism and the low glucose affinity of GCK ensures that it can change its enzymatic activity within the physiological range of glucose concentrations, GCK acts as a glucose sensor in the pancreatic beta cell. In pancreas, plays an important role in modulating insulin secretion. In liver, helps to facilitate the uptake and conversion of glucose by acting as an insulin-sensitive determinant of hepatic glucose usage. Required to provide D-glucose 6-phosphate for the synthesis of glycogen. Mediates the initial step of glycolysis by catalyzing phosphorylation of D-glucose to D-glucose 6-phosphate. The sequence is that of Hexokinase-4 from Homo sapiens (Human).